The chain runs to 312 residues: Very-long-chain 3-oxoacyl-CoA reductase-like protein At1g24470 (312 aa).

A helical transmembrane segment spans residues 14-34 (LHFVCFIGFLFLLRVLFIPLL). Residue 52-81 (GSWAMVTGATEGIGRAFAHELAKHGLNLIL) participates in NADP(+) binding. S190 contributes to the substrate binding site. Y205 (proton acceptor) is an active-site residue.

The protein belongs to the short-chain dehydrogenases/reductases (SDR) family. As to expression, expressed in green siliques, flowers, inflorescence stems and leaves. Not detected in roots.

The protein localises to the endoplasmic reticulum membrane. Its function is as follows. Probable reductase, but unlike KCR1, has no beta-ketoacyl-coenzyme A reductase activity. This chain is Very-long-chain 3-oxoacyl-CoA reductase-like protein At1g24470 (KCR2), found in Arabidopsis thaliana (Mouse-ear cress).